A 261-amino-acid chain; its full sequence is Prostatic glandular kallikrein-6 (261 aa).

Residues 1–18 (MWLLILFLILSLGWNDAA) form the signal peptide. Positions 19–24 (PPGQSR) are cleaved as a propeptide — activation peptide. A Peptidase S1 domain is found at 25-258 (IIGGFNCEKN…FTSWMKKVMK (234 aa)). Disulfide bonds link Cys-31–Cys-173, Cys-50–Cys-66, Cys-152–Cys-219, Cys-184–Cys-198, and Cys-209–Cys-234. His-65 serves as the catalytic Charge relay system. N-linked (GlcNAc...) asparagine glycosylation is present at Asn-108. Asp-120 functions as the Charge relay system in the catalytic mechanism. Catalysis depends on Ser-213, which acts as the Charge relay system.

This sequence belongs to the peptidase S1 family. Kallikrein subfamily.

The enzyme catalyses Preferential cleavage of Arg-|-Xaa bonds in small molecule substrates. Highly selective action to release kallidin (lysyl-bradykinin) from kininogen involves hydrolysis of Met-|-Xaa or Leu-|-Xaa.. Functionally, glandular kallikreins cleave Met-Lys and Arg-Ser bonds in kininogen to release Lys-bradykinin. The sequence is that of Prostatic glandular kallikrein-6 (Klk6) from Rattus norvegicus (Rat).